The following is a 256-amino-acid chain: Gamma carbonic anhydrase-like 2, mitochondrial (256 aa).

The N-terminal 33 residues, 1–33, are a transit peptide targeting the mitochondrion; the sequence is MATSLARISKRSITSAVSSNLIRRYFAAEAVAV. Residues 103-105 and 118-119 each bind substrate; these read RGD and QE. H124 is a Zn(2+) binding site. 3 residues coordinate substrate: R152, Q164, and Y231.

It belongs to the gamma-class carbonic anhydrase family. As to quaternary structure, component of the mitochondrial oxidoreductase respiratory chain complex I; element of the extra matrix-exposed domain, which is attached to the membrane arm of this complex. Interacts with GAMMACA2.

The protein resides in the mitochondrion membrane. Involved in complex I assembly in mitochondria and respiration. This Arabidopsis thaliana (Mouse-ear cress) protein is Gamma carbonic anhydrase-like 2, mitochondrial (GAMMACAL2).